We begin with the raw amino-acid sequence, 181 residues long: Crustacyanin-A1 subunit (181 aa).

3 disulfides stabilise this stretch: Cys-12/Cys-121, Cys-51/Cys-173, and Cys-117/Cys-150.

It belongs to the calycin superfamily. Lipocalin family. Oligomer; Can form dimers (beta-crustacyanin); or complexes of 16 subunits (alpha-crustacyanin). There are five types of subunits: A1, A2, A3, C1 and C2. Found in the carapace.

The protein resides in the secreted. It is found in the extracellular space. Functionally, binds the carotenoid astaxanthin (AXT) which provides the blue coloration to the carapace of the lobster. In Homarus gammarus (European lobster), this protein is Crustacyanin-A1 subunit.